The primary structure comprises 501 residues: Vitamin D 25-hydroxylase (501 aa).

The N-terminal stretch at 1 to 26 (MWKLWRAEEGAAALGGALFLLLFALG) is a signal peptide. Residue alanine 250 coordinates substrate. Cysteine 448 provides a ligand contact to heme.

Belongs to the cytochrome P450 family. In terms of assembly, homodimer. Requires heme as cofactor.

It localises to the endoplasmic reticulum membrane. It is found in the microsome membrane. The catalysed reaction is calciol + reduced [NADPH--hemoprotein reductase] + O2 = calcidiol + oxidized [NADPH--hemoprotein reductase] + H2O + H(+). The enzyme catalyses vitamin D2 + reduced [NADPH--hemoprotein reductase] + O2 = 25-hydroxyvitamin D2 + oxidized [NADPH--hemoprotein reductase] + H2O + H(+). It carries out the reaction 1alpha-hydroxyvitamin D2 + reduced [NADPH--hemoprotein reductase] + O2 = 1alpha,25-dihydroxyvitamin D2 + oxidized [NADPH--hemoprotein reductase] + H2O + H(+). It catalyses the reaction alfacalcidol + reduced [NADPH--hemoprotein reductase] + O2 = calcitriol + oxidized [NADPH--hemoprotein reductase] + H2O + H(+). It participates in hormone biosynthesis; vitamin D biosynthesis. Functionally, a cytochrome P450 monooxygenase involved in activation of vitamin D precursors. Catalyzes hydroxylation at C-25 of both forms of vitamin D, vitamin D(2) and D(3) (calciol). Can metabolize vitamin D analogs/prodrugs 1alpha-hydroxyvitamin D(2) (doxercalciferol) and 1alpha-hydroxyvitamin D(3) (alfacalcidol) forming 25-hydroxy derivatives. Mechanistically, uses molecular oxygen inserting one oxygen atom into a substrate, and reducing the second into a water molecule, with two electrons provided by NADPH via cytochrome P450 reductase (CPR; NADPH-ferrihemoprotein reductase). The chain is Vitamin D 25-hydroxylase (CYP2R1) from Homo sapiens (Human).